We begin with the raw amino-acid sequence, 193 residues long: A-type ATP synthase subunit E (193 aa).

This sequence belongs to the V-ATPase E subunit family. Has multiple subunits with at least A(3), B(3), C, D, E, F, H, I and proteolipid K(x).

It localises to the cell membrane. In terms of biological role, component of the A-type ATP synthase that produces ATP from ADP in the presence of a proton gradient across the membrane. In Haloquadratum walsbyi (strain DSM 16790 / HBSQ001), this protein is A-type ATP synthase subunit E.